The following is a 133-amino-acid chain: Ribonuclease P protein component (133 aa).

It belongs to the RnpA family. In terms of assembly, consists of a catalytic RNA component (M1 or rnpB) and a protein subunit.

The catalysed reaction is Endonucleolytic cleavage of RNA, removing 5'-extranucleotides from tRNA precursor.. RNaseP catalyzes the removal of the 5'-leader sequence from pre-tRNA to produce the mature 5'-terminus. It can also cleave other RNA substrates such as 4.5S RNA. The protein component plays an auxiliary but essential role in vivo by binding to the 5'-leader sequence and broadening the substrate specificity of the ribozyme. In Pseudomonas entomophila (strain L48), this protein is Ribonuclease P protein component.